The sequence spans 157 residues: Transcription elongation factor GreA (157 aa).

The stretch at 47–75 forms a coiled coil; that stretch reads ENAEYDAAREKQGQIEDRITELENILSNA.

It belongs to the GreA/GreB family.

Necessary for efficient RNA polymerase transcription elongation past template-encoded arresting sites. The arresting sites in DNA have the property of trapping a certain fraction of elongating RNA polymerases that pass through, resulting in locked ternary complexes. Cleavage of the nascent transcript by cleavage factors such as GreA or GreB allows the resumption of elongation from the new 3'terminus. GreA releases sequences of 2 to 3 nucleotides. In Mycoplasmopsis pulmonis (strain UAB CTIP) (Mycoplasma pulmonis), this protein is Transcription elongation factor GreA.